Consider the following 300-residue polypeptide: Transcription elongation factor A protein 2 (300 aa).

The TFIIS N-terminal domain occupies 6–83 (EEIARIARRL…KSWKKLLDAS (78 aa)). Lys-58 participates in a covalent cross-link: Glycyl lysine isopeptide (Lys-Gly) (interchain with G-Cter in ubiquitin). Phosphoserine is present on residues Ser-60 and Ser-101. The interval 84–131 (DAKARERRRGGSLPTSSSKEASEAQDPSRKRPELPRMPSTPRITTFPP) is disordered. A compositionally biased stretch (basic and acidic residues) spans 103–117 (EASEAQDPSRKRPEL). The TFIIS central domain maps to 139-255 (VRTKCREMLT…EHQMARTGGT (117 aa)). Residues 258–298 (DLFTCGKCRKKNCTYTQVQTRSSDEPMTTFVVCNECGNRWK) form a TFIIS-type zinc finger. Positions 262, 265, 290, and 293 each coordinate Zn(2+).

The protein belongs to the TFS-II family. As to quaternary structure, interacts with the basal transcription factor GTF2B. Interacts with REXO1.

The protein resides in the nucleus. Functionally, necessary for efficient RNA polymerase II transcription elongation past template-encoded arresting sites. The arresting sites in DNA have the property of trapping a certain fraction of elongating RNA polymerases that pass through, resulting in locked ternary complexes. Cleavage of the nascent transcript by S-II allows the resumption of elongation from the new 3'-terminus. This Bos taurus (Bovine) protein is Transcription elongation factor A protein 2 (TCEA2).